The following is a 520-amino-acid chain: 5'-nucleotidase domain-containing protein 2 (520 aa).

The active-site Nucleophile is the Asp73. Asp73, Asp75, and Asp358 together coordinate Mg(2+). The active-site Proton donor is Asp75.

Belongs to the 5'(3')-deoxyribonucleotidase family. In terms of assembly, interacts with tyrosine 3-monooxygenase TH; the interaction results in reduced phosphorylation and decreased catalytic activity of TH.

The protein localises to the cytoplasm. Functionally, promotes dephosphorylation of tyrosine 3-monooxygenase TH which decreases TH catalytic activity and leads to reduced synthesis of catecholamines including dopamine, noradrenaline and adrenaline. The exact mechanism of activity is unknown but may act as a phosphatase or promote the activity of phosphatases or may inhibit phosphorylation by acting as a barrier to interfere with protein kinase access. In Homo sapiens (Human), this protein is 5'-nucleotidase domain-containing protein 2 (NT5DC2).